The following is a 314-amino-acid chain: 4-hydroxy-3-methylbut-2-enyl diphosphate reductase (314 aa).

Cysteine 12 lines the [4Fe-4S] cluster pocket. (2E)-4-hydroxy-3-methylbut-2-enyl diphosphate is bound by residues histidine 43 and histidine 81. The dimethylallyl diphosphate site is built by histidine 43 and histidine 81. 2 residues coordinate isopentenyl diphosphate: histidine 43 and histidine 81. Residue cysteine 103 coordinates [4Fe-4S] cluster. A (2E)-4-hydroxy-3-methylbut-2-enyl diphosphate-binding site is contributed by histidine 131. Histidine 131 is a binding site for dimethylallyl diphosphate. Histidine 131 lines the isopentenyl diphosphate pocket. Glutamate 133 (proton donor) is an active-site residue. Threonine 170 contributes to the (2E)-4-hydroxy-3-methylbut-2-enyl diphosphate binding site. Cysteine 198 lines the [4Fe-4S] cluster pocket. Serine 226, asparagine 228, and serine 271 together coordinate (2E)-4-hydroxy-3-methylbut-2-enyl diphosphate. Dimethylallyl diphosphate is bound by residues serine 226, asparagine 228, and serine 271. Residues serine 226, asparagine 228, and serine 271 each coordinate isopentenyl diphosphate.

This sequence belongs to the IspH family. [4Fe-4S] cluster is required as a cofactor.

It carries out the reaction isopentenyl diphosphate + 2 oxidized [2Fe-2S]-[ferredoxin] + H2O = (2E)-4-hydroxy-3-methylbut-2-enyl diphosphate + 2 reduced [2Fe-2S]-[ferredoxin] + 2 H(+). The catalysed reaction is dimethylallyl diphosphate + 2 oxidized [2Fe-2S]-[ferredoxin] + H2O = (2E)-4-hydroxy-3-methylbut-2-enyl diphosphate + 2 reduced [2Fe-2S]-[ferredoxin] + 2 H(+). It participates in isoprenoid biosynthesis; dimethylallyl diphosphate biosynthesis; dimethylallyl diphosphate from (2E)-4-hydroxy-3-methylbutenyl diphosphate: step 1/1. Its pathway is isoprenoid biosynthesis; isopentenyl diphosphate biosynthesis via DXP pathway; isopentenyl diphosphate from 1-deoxy-D-xylulose 5-phosphate: step 6/6. In terms of biological role, catalyzes the conversion of 1-hydroxy-2-methyl-2-(E)-butenyl 4-diphosphate (HMBPP) into a mixture of isopentenyl diphosphate (IPP) and dimethylallyl diphosphate (DMAPP). Acts in the terminal step of the DOXP/MEP pathway for isoprenoid precursor biosynthesis. This chain is 4-hydroxy-3-methylbut-2-enyl diphosphate reductase, found in Bacillus pumilus (strain SAFR-032).